The chain runs to 1380 residues: MKAPAALAPGILVLLLTLVQKGGGECREALAKSEMNVNMRYRLPNFTADTPIQNVVVHEGHVFLGAINSIYVLRERDLQQVSEYKTGPVWEHPDCLPCQACGLAGGQWRENVNMALLVETYYDDQLISCGSVHRGTCQRHVLPRDNPADIQAEVHCMHSPRADEDEASQCPDCVVSALGTKVLLAEKQRFVNFFVGNTLNGSSLPGHALHSISVRRIKETQDGFKFLTDKSYIDVLPEFQASYPIKYIHAFESNRFIYFLTVQRETLDSPSFHTRIIRFCSADSGLRSYMEMPLECILTEKRRKRALRSEVFNVLQAAYVGKPGAQLAKQIGASAHDDILYGVFSQSRPDSAEPTDRSALCAFPVKYVDEFFHRIVNKNNVRCLQHFYGPNHLHCFNRTLLRNSSGCEVRSDEYRTEFTTALQRIDLSAGHFSQVLLTSISTFIKGDLTIANLGTSEGRFMQVVVSRSGSWTPHVDFRLDSHAVSPEVIVEHPVNQNGYTLVVTGKKITKIPLDGLGCEHFQSCSQCLSAPPFVQCGWCHDKCARAEDCPNGTWTQEICLPTIYEVFPASAPLEGGTTLTVCGWDFGFRRNNKSDFKRTRVLIGNESCPLTLSESTPNMLKCTVGPAMSEHSNLSIIISNVRGTAPQYRTFSYVDPEITSISPSYGPKAGGTLVTLTGKYLNSGNSRHISIGGKTCTLKSVSDSVLECYTPAQSISADFPVKLKIDLANREAYSFSYQENPLVVEIHPTKSFVSGGSTITVVGKNLNSVSVPRMIINVHEVEMNFTVACQQRSNSELICCTTPSLQQLDLQLPLKATAFFMLDGIHSRDFDLIYVPNPVFKLFEKPVMISMGNENVLEIKGNDIDPEAVKGEVLKVGNKSCENIHSYPESVLCTVPNDLLKLNSELNIEWKQAVSSTVLGKVIVQPDQNFTGLIVGVVSISVILLSSLGLFLWLKKRKQIKDLGSELVCYDARVHTPHLDRLVSARSVSPTTEMVSNESVDYRATFPEDQFPNSSQNGSCRQVQYPLPDLSPILTSGDSDISSPLLQNTVHIDLSALNPELVQAVQHVVIGPSSLIVHFNEVIGRGHFGCVYHGTLLDNDDRKIHCAVKSLNRITDIGEVSQFLTEGIIMKDFSHPNVLSLLGICLRSEGSPLVVLPYMKHGDLRNFIRNETHSPTVKDLIGFGLQVAKGMKYLASKKFVHRDLAARNCMLDGKFTVKVADFGLARDMYDKEYYSVHNKTGAKLPVKWMALESLQTQKFTTKSDVWSFGVLLWELMTRGAPPYPDVNTFDITVYLLQGRRLLQPEYCPDPLYEVMLKCWHPKAEMRPSFTELVSRISAIFSTFIGEHYVHVNATYVNVKCVAPYPSLLSSHDTVDGEVDT.

The first 24 residues, methionine 1–glycine 24, serve as a signal peptide directing secretion. Over glutamate 25–threonine 931 the chain is Extracellular. Positions arginine 27 to leucine 513 constitute a Sema domain. The N-linked (GlcNAc...) asparagine glycan is linked to asparagine 45. 4 disulfides stabilise this stretch: cysteine 95–cysteine 101, cysteine 98–cysteine 156, cysteine 129–cysteine 137, and cysteine 170–cysteine 173. N-linked (GlcNAc...) asparagine glycosylation is present at asparagine 200. 2 disulfides stabilise this stretch: cysteine 296/cysteine 361 and cysteine 383/cysteine 395. N-linked (GlcNAc...) asparagine glycosylation is found at asparagine 397 and asparagine 403. Disulfide bonds link cysteine 518–cysteine 536, cysteine 524–cysteine 559, cysteine 527–cysteine 543, and cysteine 539–cysteine 549. Residue asparagine 551 is glycosylated (N-linked (GlcNAc...) asparagine). 3 consecutive IPT/TIG domains span residues proline 561–valine 654, proline 656–glutamine 738, and proline 741–valine 835. Threonine 580 carries O-linked (Man) threonine glycosylation. Residues asparagine 592, asparagine 605, and asparagine 633 are each glycosylated (N-linked (GlcNAc...) asparagine). Residues threonine 675 and threonine 760 are each glycosylated (O-linked (Man) threonine). 3 N-linked (GlcNAc...) asparagine glycosylation sites follow: asparagine 784, asparagine 878, and asparagine 929. The helical transmembrane segment at glycine 932–leucine 954 threads the bilayer. The Cytoplasmic segment spans residues lysine 955 to threonine 1380. Position 965 is a phosphoserine (serine 965). Threonine 976 carries the post-translational modification Phosphothreonine. 3 positions are modified to phosphoserine: serine 989, serine 996, and serine 999. A Phosphotyrosine modification is found at tyrosine 1002. Residues valine 1077 to isoleucine 1344 enclose the Protein kinase domain. Residues isoleucine 1083–valine 1091 and lysine 1109 each bind ATP. Aspartate 1203 serves as the catalytic Proton acceptor. Residues leucine 1211–threonine 1380 form an interaction with RANBP9 region. Phosphotyrosine is present on tyrosine 1229. A phosphotyrosine; by autocatalysis mark is found at tyrosine 1233 and tyrosine 1234. Phosphothreonine is present on threonine 1288. Residues tryptophan 1319–valine 1358 are interaction with MUC20. Phosphotyrosine; by autocatalysis is present on residues tyrosine 1348 and tyrosine 1355. The residue at position 1364 (tyrosine 1364) is a Phosphotyrosine.

It belongs to the protein kinase superfamily. Tyr protein kinase family. Heterodimer made of an alpha chain (50 kDa) and a beta chain (145 kDa) which are disulfide linked. Binds PLXNB1. Interacts when phosphorylated with downstream effectors including STAT3, PIK3R1, SRC, PCLG1, GRB2 and GAB1. Interacts with SPSB1, SPSB2 and SPSB4. Interacts with INPP5D/SHIP1. When phosphorylated at Tyr-1355, interacts with INPPL1/SHIP2. Interacts with RANBP9 and RANBP10, as well as SPSB1, SPSB2, SPSB3 and SPSB4. SPSB1 binding occurs in the presence and in the absence of HGF, however HGF treatment has a positive effect on this interaction. Interacts with MUC20; prevents interaction with GRB2 and suppresses hepatocyte growth factor-induced cell proliferation. Interacts with GRB10. Interacts with PTPN1 and PTPN2. Interacts with HSP90AA1 and HSP90AB1; the interaction suppresses MET kinase activity. Interacts with tensin TNS3. Interacts (when phosphorylated) with tensin TNS4 (via SH2 domain); the interaction increases MET protein stability by inhibiting MET endocytosis and subsequent lysosomal degradation. In terms of processing, autophosphorylated in response to ligand binding on Tyr-1233 and Tyr-1234 in the kinase domain leading to further phosphorylation of Tyr-1348 and Tyr-1355 in the C-terminal multifunctional docking site. Dephosphorylated by PTPRJ at Tyr-1348 and Tyr-1364. Dephosphorylated by PTPN1 and PTPN2. Post-translationally, ubiquitinated. Ubiquitination by CBL regulates the receptor stability and activity through proteasomal degradation. O-mannosylation of IPT/TIG domains by TMEM260 is required for protein maturation. O-mannosylated residues are composed of single mannose glycans that are not elongated or modified.

It localises to the membrane. It catalyses the reaction L-tyrosyl-[protein] + ATP = O-phospho-L-tyrosyl-[protein] + ADP + H(+). With respect to regulation, in its inactive state, the C-terminal tail interacts with the catalytic domain and inhibits the kinase activity. Upon ligand binding, the C-terminal tail is displaced and becomes phosphorylated, thus increasing the kinase activity. Its function is as follows. Receptor tyrosine kinase that transduces signals from the extracellular matrix into the cytoplasm by binding to hepatocyte growth factor/HGF ligand. Regulates many physiological processes including proliferation, scattering, morphogenesis and survival. Ligand binding at the cell surface induces autophosphorylation of MET on its intracellular domain that provides docking sites for downstream signaling molecules. Following activation by ligand, interacts with the PI3-kinase subunit PIK3R1, PLCG1, SRC, GRB2, STAT3 or the adapter GAB1. Recruitment of these downstream effectors by MET leads to the activation of several signaling cascades including the RAS-ERK, PI3 kinase-AKT, or PLCgamma-PKC. The RAS-ERK activation is associated with the morphogenetic effects while PI3K/AKT coordinates prosurvival effects. During embryonic development, MET signaling plays a role in gastrulation, development and migration of muscles and neuronal precursors, angiogenesis and kidney formation. In adults, participates in wound healing as well as organ regeneration and tissue remodeling. Also promotes differentiation and proliferation of hematopoietic cells. The polypeptide is Hepatocyte growth factor receptor (MET) (Echinops telfairi (Lesser hedgehog tenrec)).